The sequence spans 264 residues: PDZ domain-containing protein 9 (264 aa).

In terms of domain architecture, PDZ spans 30–109 (QTKLTVGSLG…GTVLQIKVYR (80 aa)).

This is PDZ domain-containing protein 9 (PDZD9) from Homo sapiens (Human).